A 431-amino-acid polypeptide reads, in one-letter code: Tryptophan--tRNA ligase (431 aa).

Residues 12–14 (TPS) and 20–21 (GN) each bind ATP. Residues 13-21 (PSGTPHLGN) carry the 'HIGH' region motif. L-tryptophan is bound at residue aspartate 145. Residues 157 to 159 (GRD), leucine 197, and 204 to 208 (KMSKS) contribute to the ATP site. The 'KMSKS' region signature appears at 204–208 (KMSKS).

Belongs to the class-I aminoacyl-tRNA synthetase family. In terms of assembly, homodimer.

The protein resides in the cytoplasm. The enzyme catalyses tRNA(Trp) + L-tryptophan + ATP = L-tryptophyl-tRNA(Trp) + AMP + diphosphate + H(+). Catalyzes the attachment of tryptophan to tRNA(Trp). This is Tryptophan--tRNA ligase from Xanthomonas campestris pv. campestris (strain ATCC 33913 / DSM 3586 / NCPPB 528 / LMG 568 / P 25).